Reading from the N-terminus, the 130-residue chain is UPF0102 protein BT_1882 (130 aa).

The protein belongs to the UPF0102 family.

This Bartonella tribocorum (strain CIP 105476 / IBS 506) protein is UPF0102 protein BT_1882.